Reading from the N-terminus, the 1318-residue chain is DNA-directed RNA polymerase subunit beta' (1318 aa).

Zn(2+) is bound by residues Cys-60, Cys-62, Cys-75, and Cys-78. Mg(2+)-binding residues include Asp-535, Asp-537, and Asp-539. 4 residues coordinate Zn(2+): Cys-890, Cys-967, Cys-974, and Cys-977.

The protein belongs to the RNA polymerase beta' chain family. The RNAP catalytic core consists of 2 alpha, 1 beta, 1 beta' and 1 omega subunit. When a sigma factor is associated with the core the holoenzyme is formed, which can initiate transcription. It depends on Mg(2+) as a cofactor. Requires Zn(2+) as cofactor.

The enzyme catalyses RNA(n) + a ribonucleoside 5'-triphosphate = RNA(n+1) + diphosphate. In terms of biological role, DNA-dependent RNA polymerase catalyzes the transcription of DNA into RNA using the four ribonucleoside triphosphates as substrates. This chain is DNA-directed RNA polymerase subunit beta', found in Rhodococcus jostii (strain RHA1).